The chain runs to 446 residues: B3 domain-containing protein REM12 (446 aa).

A disordered region spans residues 1-46; the sequence is MVLNSSDLGPSRCDIRDLPAPSSTNDQGKTELARKKKVKRSNTEIE. 2 DNA-binding regions (TF-B3) span residues 56-153 and 193-289; these read CFVA…FCST and FMTL…VNTQ. A disordered region spans residues 295–334; the sequence is SQQGECSRDSEKESSICAEPSRGNKKWKATNNRKERRDSS. Residues 341 to 435 constitute a DNA-binding region (TF-B3 3); that stretch reads YVTLTLTPED…TTPVFKFCSN (95 aa).

It localises to the nucleus. In Arabidopsis thaliana (Mouse-ear cress), this protein is B3 domain-containing protein REM12 (REM12).